The primary structure comprises 212 residues: Uridine kinase (212 aa).

An ATP-binding site is contributed by 13–20 (GGSGSGKT).

It belongs to the uridine kinase family.

It is found in the cytoplasm. It carries out the reaction uridine + ATP = UMP + ADP + H(+). It catalyses the reaction cytidine + ATP = CMP + ADP + H(+). It functions in the pathway pyrimidine metabolism; CTP biosynthesis via salvage pathway; CTP from cytidine: step 1/3. The protein operates within pyrimidine metabolism; UMP biosynthesis via salvage pathway; UMP from uridine: step 1/1. In Bacillus thuringiensis (strain Al Hakam), this protein is Uridine kinase.